A 337-amino-acid chain; its full sequence is MAVLASWVWVLAGCFCAAVAEVSDSSDPYPPLWEDSPEQLSDYMMEDGNYIINPWVYTDRMGMYRILLEETAMYFAKYGPENEQNLLWGLPLQFGWQYQSGRLADPTGMTDCGNELNESLCVSVDSWWADINYYLSVIPFLAAVDSGITGISPNQITILPPPKDQMRFCYNVSDCQSAVPGTMNRWRDFFQYMQLNSSDFDGLLNYLWEAHASSLDYPTSAFGDRYNFYSEKEANFEENWAIAVNYLAAARLPTTQNRTYSFQRGLPPRVLVDTDIAPFIPDFTPLQNEVLVSLKLLGDTDRNSGSLSLTLWENLMSTKLARTLFLKAFEEFLATSS.

A signal peptide spans Met-1–Ala-20. Asn-171 carries N-linked (GlcNAc...) asparagine glycosylation.

The protein belongs to the LEG1 family.

Its subcellular location is the secreted. May be involved in early liver development. The protein is Protein LEG1 homolog of Mus musculus (Mouse).